Here is a 308-residue protein sequence, read N- to C-terminus: Pantoate--beta-alanine ligase (308 aa).

A propeptide (removed; partial) is located at residue Ala2.

The protein belongs to the pantothenate synthetase family. Homodimer. In terms of tissue distribution, expressed at low levels in leaf and root.

The protein resides in the cytoplasm. It catalyses the reaction (R)-pantoate + beta-alanine + ATP = (R)-pantothenate + AMP + diphosphate + H(+). It participates in cofactor biosynthesis; (R)-pantothenate biosynthesis; (R)-pantothenate from (R)-pantoate and beta-alanine: step 1/1. This is Pantoate--beta-alanine ligase (PANC) from Lotus japonicus (Lotus corniculatus var. japonicus).